A 350-amino-acid polypeptide reads, in one-letter code: 3-dehydroquinate synthase (350 aa).

NAD(+) contacts are provided by residues 106–110, 130–131, K143, and K152; these read GVIGD and TS. Zn(2+)-binding residues include E185, H246, and H263.

It belongs to the sugar phosphate cyclases superfamily. Dehydroquinate synthase family. It depends on Co(2+) as a cofactor. The cofactor is Zn(2+). NAD(+) is required as a cofactor.

It is found in the cytoplasm. It catalyses the reaction 7-phospho-2-dehydro-3-deoxy-D-arabino-heptonate = 3-dehydroquinate + phosphate. It functions in the pathway metabolic intermediate biosynthesis; chorismate biosynthesis; chorismate from D-erythrose 4-phosphate and phosphoenolpyruvate: step 2/7. Its function is as follows. Catalyzes the conversion of 3-deoxy-D-arabino-heptulosonate 7-phosphate (DAHP) to dehydroquinate (DHQ). This is 3-dehydroquinate synthase from Clostridium beijerinckii (strain ATCC 51743 / NCIMB 8052) (Clostridium acetobutylicum).